The chain runs to 236 residues: Leucyl/phenylalanyl-tRNA--protein transferase (236 aa).

Belongs to the L/F-transferase family.

It is found in the cytoplasm. It carries out the reaction N-terminal L-lysyl-[protein] + L-leucyl-tRNA(Leu) = N-terminal L-leucyl-L-lysyl-[protein] + tRNA(Leu) + H(+). The catalysed reaction is N-terminal L-arginyl-[protein] + L-leucyl-tRNA(Leu) = N-terminal L-leucyl-L-arginyl-[protein] + tRNA(Leu) + H(+). It catalyses the reaction L-phenylalanyl-tRNA(Phe) + an N-terminal L-alpha-aminoacyl-[protein] = an N-terminal L-phenylalanyl-L-alpha-aminoacyl-[protein] + tRNA(Phe). Functions in the N-end rule pathway of protein degradation where it conjugates Leu, Phe and, less efficiently, Met from aminoacyl-tRNAs to the N-termini of proteins containing an N-terminal arginine or lysine. The protein is Leucyl/phenylalanyl-tRNA--protein transferase of Shewanella halifaxensis (strain HAW-EB4).